A 169-amino-acid chain; its full sequence is Ribosome maturation factor RimM (169 aa).

One can recognise a PRC barrel domain in the interval 94-167 (ENEFYFHEII…KITIEVMEGL (74 aa)).

The protein belongs to the RimM family. Binds ribosomal protein uS19.

It localises to the cytoplasm. In terms of biological role, an accessory protein needed during the final step in the assembly of 30S ribosomal subunit, possibly for assembly of the head region. Essential for efficient processing of 16S rRNA. May be needed both before and after RbfA during the maturation of 16S rRNA. It has affinity for free ribosomal 30S subunits but not for 70S ribosomes. The chain is Ribosome maturation factor RimM from Listeria monocytogenes serotype 4b (strain F2365).